We begin with the raw amino-acid sequence, 254 residues long: 3-oxo-5-alpha-steroid 4-dehydrogenase 2 (254 aa).

The next 4 helical transmembrane spans lie at 8–28 (SPVL…LYVA), 72–92 (PLSL…VHYF), 146–166 (FCLG…SDYI), and 206–226 (LATW…FLGL).

This sequence belongs to the steroid 5-alpha reductase family.

Its subcellular location is the microsome membrane. The protein localises to the endoplasmic reticulum membrane. It carries out the reaction a 3-oxo-5alpha-steroid + NADP(+) = a 3-oxo-Delta(4)-steroid + NADPH + H(+). The catalysed reaction is 17beta-hydroxy-5alpha-androstan-3-one + NADP(+) = testosterone + NADPH + H(+). It catalyses the reaction 5alpha-pregnane-3,20-dione + NADP(+) = progesterone + NADPH + H(+). Functionally, converts testosterone (T) into 5-alpha-dihydrotestosterone (DHT) and progesterone or corticosterone into their corresponding 5-alpha-3-oxosteroids. It plays a central role in sexual differentiation and androgen physiology. This Macaca fascicularis (Crab-eating macaque) protein is 3-oxo-5-alpha-steroid 4-dehydrogenase 2 (SRD5A2).